A 114-amino-acid polypeptide reads, in one-letter code: Nucleoid-associated protein MAB_0319 (114 aa).

Belongs to the YbaB/EbfC family. As to quaternary structure, homodimer.

It is found in the cytoplasm. Its subcellular location is the nucleoid. Its function is as follows. Binds to DNA and alters its conformation. May be involved in regulation of gene expression, nucleoid organization and DNA protection. This chain is Nucleoid-associated protein MAB_0319, found in Mycobacteroides abscessus (strain ATCC 19977 / DSM 44196 / CCUG 20993 / CIP 104536 / JCM 13569 / NCTC 13031 / TMC 1543 / L948) (Mycobacterium abscessus).